Consider the following 359-residue polypeptide: Alanine racemase, biosynthetic (359 aa).

The active-site Proton acceptor; specific for D-alanine is the Lys-34. N6-(pyridoxal phosphate)lysine is present on Lys-34. Position 129 (Arg-129) interacts with substrate. Catalysis depends on Tyr-255, which acts as the Proton acceptor; specific for L-alanine. Met-303 is a substrate binding site.

It belongs to the alanine racemase family. Requires pyridoxal 5'-phosphate as cofactor.

The enzyme catalyses L-alanine = D-alanine. The protein operates within amino-acid biosynthesis; D-alanine biosynthesis; D-alanine from L-alanine: step 1/1. It functions in the pathway cell wall biogenesis; peptidoglycan biosynthesis. In terms of biological role, catalyzes the interconversion of L-alanine and D-alanine. Provides the D-alanine required for cell wall biosynthesis. The sequence is that of Alanine racemase, biosynthetic (alr) from Salmonella typhi.